The chain runs to 120 residues: Large ribosomal subunit protein eL18 (120 aa).

It belongs to the eukaryotic ribosomal protein eL18 family.

The protein is Large ribosomal subunit protein eL18 of Pyrococcus abyssi (strain GE5 / Orsay).